A 283-amino-acid polypeptide reads, in one-letter code: Pantothenate synthetase (283 aa).

34–41 (MGALHDGH) contacts ATP. Catalysis depends on histidine 41, which acts as the Proton donor. Glutamine 65 serves as a coordination point for (R)-pantoate. Glutamine 65 is a binding site for beta-alanine. 152–155 (GSKD) provides a ligand contact to ATP. A (R)-pantoate-binding site is contributed by glutamine 158. ATP contacts are provided by residues valine 181 and 189–192 (MSSR).

This sequence belongs to the pantothenate synthetase family. Homodimer.

It localises to the cytoplasm. The enzyme catalyses (R)-pantoate + beta-alanine + ATP = (R)-pantothenate + AMP + diphosphate + H(+). Its pathway is cofactor biosynthesis; (R)-pantothenate biosynthesis; (R)-pantothenate from (R)-pantoate and beta-alanine: step 1/1. In terms of biological role, catalyzes the condensation of pantoate with beta-alanine in an ATP-dependent reaction via a pantoyl-adenylate intermediate. The sequence is that of Pantothenate synthetase from Rhodopseudomonas palustris (strain ATCC BAA-98 / CGA009).